The chain runs to 332 residues: MEITVYIPGIEENQRPHFDEIFSTFAKRGNVREAVSSLHKLFKKQKNTGLLASLVILKQFVDTSRKSQERFNLLEILQQTKFLAQSIYKHIKSQEHSCDMEDMFSDCKDRMSLILSESCGCLNCITTTKQLMNSLCDARPPKLSSHKKVCQAHNFLTTVHNQVVVADRVSVSVLSLSDLVLDMGDFPELPKDIQLETRGVASCVYLCWFYYMLLKHVQNDFEILEASINNWLLTNGYSQGFTSYDNLLPIVTTKRGSGELTYNLDSFQVLQNTLQTVRNFLTTQPPRREQKHLLTLLKEKGYYVEPKESMCKTPQCPEEEGGLPFLKKLGTG.

This sequence belongs to the herpesviridae BBRF2 family.

This is an uncharacterized protein from Bos taurus (Bovine).